The chain runs to 469 residues: MAQGNNYGQTSNGVADESPNMLVYRKMEDVIARMQDEKNGIPIRTVKSFLSKIPSVFSGSDIVQWLIKNLTIEDPVEALHLGTLMAAHGYFFPISDHVLTLKDDGTFYRFQTPYFWPSNCWEPENTDYAVYLCKRTMQNKARLELADYEAESLARLQRAFARKWEFIFMQAEAQAKVDKKRDKIERKILDSQERAFWDVHRPVPGCVNTTEVDIKKSSRMRNPHKTRKSVYGLQNDIRSHSPTHTPTPETKPPTEDELHQQIKYWQIQLDRHRLKMSKVADSLLSYTEQYVEYDPFLVPPDPSNPWLSDDTTFWELEASKEPSQQRVKRWGFGMDEALKDPVGREQFLKFLESEFSSENLRFWLAVEDLKRRPIREVPSRVQEIWQEFLAPGAPSAINLDSKSYDKTTQNVKEPGRYTFEDAQEHIYKLMKSDSYPRFIRSSAYQELLQAKRKGKTLTSKRLTSLVQSY.

Positions 37-112 (EKNGIPIRTV…DDGTFYRFQT (76 aa)) constitute a DEP domain. 2 positions are modified to phosphoserine: serine 229 and serine 241. A disordered region spans residues 236–255 (DIRSHSPTHTPTPETKPPTE). Threonine 243 bears the Phosphothreonine mark. Residues 255–316 (EDELHQQIKY…LSDDTTFWEL (62 aa)) form the G protein gamma domain. In terms of domain architecture, RGS spans 333–448 (GMDEALKDPV…IRSSAYQELL (116 aa)). Serine 434 carries the post-translational modification Phosphoserine.

In terms of assembly, interacts with GNB5, forming the RGS7-GNB5 complex. Interacts with GPR158; promotes the GTPase activator activity of the RGS7-GNB5 complex in absence of glycine, in contrast GTPase activator activity of the RGS7-GNB5 complex is inhibited in presence of glycine. Interacts with GPR179. Interacts with PKD1; this prevents rapid proteasomal degradation. Interacts with RGS7BP, leading to regulate the subcellular location of the heterodimer formed with GNB5. Interacts (phosphorylated form) with 14-3-3 protein YWHAQ. Interacts with SNAPIN. Interacts with GNAI1. Interacts with GNAO1, GNAI3 and GNAZ. Palmitoylated. In terms of processing, ubiquitinated, leading to rapid proteasomal degradation. Post-translationally, phosphorylation and subsequent interaction with 14-3-3 proteins inhibits GAP activity. In terms of tissue distribution, detected in brain (at protein level).

The protein localises to the cytoplasm. It is found in the cytosol. It localises to the cell membrane. The protein resides in the membrane. Its function is as follows. GTPase activator component of the RGS7-GNB5 complex that regulates G protein-coupled receptor signaling cascades. The RGS7-GNB5 complex acts as an inhibitor signal transduction by promoting the GTPase activity of G protein alpha subunits, such as GNAO1, thereby driving them into their inactive GDP-bound form. May play a role in synaptic vesicle exocytosis. Glycine-dependent regulation of the RGS7-GNB5 complex by GPR158 affects mood and cognition via its ability to regulate neuronal excitability in L2/L3 pyramidal neurons of the prefrontal cortex. Modulates the activity of potassium channels that are activated by GNAO1 in response to muscarinic acetylcholine receptor M2/CHRM2 signaling. This chain is Regulator of G-protein signaling 7 (Rgs7), found in Mus musculus (Mouse).